Here is a 209-residue protein sequence, read N- to C-terminus: Mediator of RNA polymerase II transcription subunit 20 (209 aa).

This sequence belongs to the Mediator complex subunit 20 family. As to quaternary structure, component of the Mediator complex.

The protein resides in the nucleus. In terms of biological role, component of the Mediator complex, a coactivator involved in the regulated transcription of nearly all RNA polymerase II-dependent genes. Mediator functions as a bridge to convey information from gene-specific regulatory proteins to the basal RNA polymerase II transcription machinery. Mediator is recruited to promoters by direct interactions with regulatory proteins and serves as a scaffold for the assembly of a functional preinitiation complex with RNA polymerase II and the general transcription factors. In Eremothecium gossypii (strain ATCC 10895 / CBS 109.51 / FGSC 9923 / NRRL Y-1056) (Yeast), this protein is Mediator of RNA polymerase II transcription subunit 20 (SRB2).